A 248-amino-acid polypeptide reads, in one-letter code: Probable septum site-determining protein MinC (248 aa).

Residues 115–144 (PTAVSPPPPPPPPARAEPAPPAARPAPGRM) are disordered. Over residues 118–138 (VSPPPPPPPPARAEPAPPAAR) the composition is skewed to pro residues.

This sequence belongs to the MinC family. As to quaternary structure, interacts with MinD and FtsZ.

In terms of biological role, cell division inhibitor that blocks the formation of polar Z ring septums. Rapidly oscillates between the poles of the cell to destabilize FtsZ filaments that have formed before they mature into polar Z rings. Prevents FtsZ polymerization. The sequence is that of Probable septum site-determining protein MinC from Xanthomonas euvesicatoria pv. vesicatoria (strain 85-10) (Xanthomonas campestris pv. vesicatoria).